The sequence spans 240 residues: Ubiquinone biosynthesis O-methyltransferase (240 aa).

Residues Arg44, Gly64, Asp85, and Met129 each contribute to the S-adenosyl-L-methionine site.

This sequence belongs to the methyltransferase superfamily. UbiG/COQ3 family.

The enzyme catalyses a 3-demethylubiquinol + S-adenosyl-L-methionine = a ubiquinol + S-adenosyl-L-homocysteine + H(+). It carries out the reaction a 3-(all-trans-polyprenyl)benzene-1,2-diol + S-adenosyl-L-methionine = a 2-methoxy-6-(all-trans-polyprenyl)phenol + S-adenosyl-L-homocysteine + H(+). It participates in cofactor biosynthesis; ubiquinone biosynthesis. In terms of biological role, O-methyltransferase that catalyzes the 2 O-methylation steps in the ubiquinone biosynthetic pathway. This Escherichia coli O127:H6 (strain E2348/69 / EPEC) protein is Ubiquinone biosynthesis O-methyltransferase.